Consider the following 180-residue polypeptide: Signal peptidase complex subunit 2 (180 aa).

The Cytoplasmic segment spans residues 1–45 (MSDERITVVNKWDGPTVKNGLDEVVKKILNDKVGWTEQHNLMNLR). Residues 46–66 (LLISFIGVAFSAFACGYDFYA) form a helical membrane-spanning segment. At 67–72 (PFPKSK) the chain is on the lumenal side. A helical membrane pass occupies residues 73 to 93 (IVLLVCSVSYFICMGVLQLFQ). At 94 to 180 (WYVEKDCFYE…LWARLIRSEQ (87 aa)) the chain is on the cytoplasmic side.

Belongs to the SPCS2 family. In terms of assembly, component of the signal peptidase complex (SPC) composed of a catalytic subunit sec-11 and three accessory subunits spcs-1, spcs-2 and spcs-3. The complex induces a local thinning of the ER membrane which is used to measure the length of the signal peptide (SP) h-region of protein substrates. This ensures the selectivity of the complex towards h-regions shorter than 18-20 amino acids.

The protein resides in the endoplasmic reticulum membrane. Its function is as follows. Component of the signal peptidase complex (SPC) which catalyzes the cleavage of N-terminal signal sequences from nascent proteins as they are translocated into the lumen of the endoplasmic reticulum. Enhances the enzymatic activity of SPC and facilitates the interactions between different components of the translocation site. The chain is Signal peptidase complex subunit 2 from Caenorhabditis briggsae.